A 201-amino-acid chain; its full sequence is Ribosomal RNA small subunit methyltransferase G (201 aa).

S-adenosyl-L-methionine-binding positions include Gly71, Phe76, 120–121 (LE), and Arg134.

It belongs to the methyltransferase superfamily. RNA methyltransferase RsmG family.

It localises to the cytoplasm. The enzyme catalyses guanosine(527) in 16S rRNA + S-adenosyl-L-methionine = N(7)-methylguanosine(527) in 16S rRNA + S-adenosyl-L-homocysteine. Its function is as follows. Specifically methylates the N7 position of guanine in position 527 of 16S rRNA. This is Ribosomal RNA small subunit methyltransferase G from Rhodospirillum rubrum (strain ATCC 11170 / ATH 1.1.1 / DSM 467 / LMG 4362 / NCIMB 8255 / S1).